Here is a 517-residue protein sequence, read N- to C-terminus: Cytochrome P450 11B, mitochondrial (517 aa).

A mitochondrion-targeting transit peptide spans 1–45 (MLEKTAARQIGSCLMRCRTLDTTSPLWTGFSRLSTAPLIHEARED). Cys465 provides a ligand contact to heme.

The protein belongs to the cytochrome P450 family. Requires heme as cofactor.

It is found in the mitochondrion membrane. The catalysed reaction is a steroid + 2 reduced [adrenodoxin] + O2 + 2 H(+) = an 11beta-hydroxysteroid + 2 oxidized [adrenodoxin] + H2O. Functionally, has 11 beta-hydroxylation, 18-hydroxylation activities and aldosterone synthetic activity. Catalyzes the final steps of glucocorticoid and mineralocorticoid biosynthesis. This is Cytochrome P450 11B, mitochondrial (CYP11B) from Aquarana catesbeiana (American bullfrog).